Reading from the N-terminus, the 292-residue chain is Probable 2-(5''-triphosphoribosyl)-3'-dephosphocoenzyme-A synthase (292 aa).

Belongs to the CitG/MdcB family.

The catalysed reaction is 3'-dephospho-CoA + ATP = 2'-(5''-triphospho-alpha-D-ribosyl)-3'-dephospho-CoA + adenine. This Shigella flexneri serotype 5b (strain 8401) protein is Probable 2-(5''-triphosphoribosyl)-3'-dephosphocoenzyme-A synthase.